Here is a 71-residue protein sequence, read N- to C-terminus: uncharacterized protein (71 aa).

The protein localises to the plastid. It localises to the chloroplast. This is an uncharacterized protein from Mesostigma viride (Green alga).